Consider the following 477-residue polypeptide: Glycogen synthase (477 aa).

Lysine 15 serves as a coordination point for ADP-alpha-D-glucose.

The protein belongs to the glycosyltransferase 1 family. Bacterial/plant glycogen synthase subfamily.

It catalyses the reaction [(1-&gt;4)-alpha-D-glucosyl](n) + ADP-alpha-D-glucose = [(1-&gt;4)-alpha-D-glucosyl](n+1) + ADP + H(+). It participates in glycan biosynthesis; glycogen biosynthesis. Synthesizes alpha-1,4-glucan chains using ADP-glucose. This is Glycogen synthase from Klebsiella pneumoniae subsp. pneumoniae (strain ATCC 700721 / MGH 78578).